Reading from the N-terminus, the 137-residue chain is Large ribosomal subunit protein uL16 (137 aa).

This sequence belongs to the universal ribosomal protein uL16 family. As to quaternary structure, part of the 50S ribosomal subunit.

In terms of biological role, binds 23S rRNA and is also seen to make contacts with the A and possibly P site tRNAs. This chain is Large ribosomal subunit protein uL16, found in Psychrobacter sp. (strain PRwf-1).